A 303-amino-acid polypeptide reads, in one-letter code: Methionyl-tRNA formyltransferase (303 aa).

108–111 (SDLP) contacts (6S)-5,6,7,8-tetrahydrofolate.

This sequence belongs to the Fmt family.

The catalysed reaction is L-methionyl-tRNA(fMet) + (6R)-10-formyltetrahydrofolate = N-formyl-L-methionyl-tRNA(fMet) + (6S)-5,6,7,8-tetrahydrofolate + H(+). Its function is as follows. Attaches a formyl group to the free amino group of methionyl-tRNA(fMet). The formyl group appears to play a dual role in the initiator identity of N-formylmethionyl-tRNA by promoting its recognition by IF2 and preventing the misappropriation of this tRNA by the elongation apparatus. This is Methionyl-tRNA formyltransferase from Rickettsia prowazekii (strain Madrid E).